The sequence spans 98 residues: DNA-binding protein Fis (98 aa).

The segment at residues 74-93 is a DNA-binding region (H-T-H motif); sequence QTRAAVMMGINRGTLRKKLK.

Belongs to the transcriptional regulatory Fis family. Homodimer.

Functionally, activates ribosomal RNA transcription. Plays a direct role in upstream activation of rRNA promoters. This chain is DNA-binding protein Fis, found in Aeromonas hydrophila subsp. hydrophila (strain ATCC 7966 / DSM 30187 / BCRC 13018 / CCUG 14551 / JCM 1027 / KCTC 2358 / NCIMB 9240 / NCTC 8049).